Consider the following 867-residue polypeptide: Armadillo repeat-containing protein 2 (867 aa).

2 disordered regions span residues 1-115 and 214-252; these read MLSP…CFSF and TSLP…AVPK. Polar residues-rich tracts occupy residues 18-28, 40-50, and 60-69; these read PSVSKQKTSAE, VRTQRPFTPQE, and SSRTSENRPP. Low complexity-rich tracts occupy residues 70–81 and 234–243; these read SSFSLHASSFES and SSCPSSSDLS. 12 ARM repeats span residues 262 to 301, 304 to 344, 363 to 403, 408 to 449, 462 to 503, 506 to 547, 551 to 589, 591 to 616, 619 to 662, 664 to 705, 707 to 746, and 748 to 790; these read IEVD…HALE, NMLG…ALKV, EKND…SIKF, LGFL…HLLV, SLVR…KLTS, DCCT…NLTA, QARE…QRGE, HRAQ…NIAI, GVGP…NLSY, QVKN…NLSQ, HDVC…NLTV, and KDKR…NFSE.

In terms of tissue distribution, expressed at higher level in testis.

Its function is as follows. Required for sperm flagellum axoneme organization and function. Involved in axonemal central pair complex assembly and/or stability. In Homo sapiens (Human), this protein is Armadillo repeat-containing protein 2.